We begin with the raw amino-acid sequence, 55 residues long: UPF0434 protein BPEN_388 (55 aa).

Belongs to the UPF0434 family.

The chain is UPF0434 protein BPEN_388 from Blochmanniella pennsylvanica (strain BPEN).